Here is a 319-residue protein sequence, read N- to C-terminus: Annexin A4 (319 aa).

Ala-2 carries the post-translational modification N-acetylalanine. Thr-7 is modified (phosphothreonine; by PKC). Ser-12 is subject to Phosphoserine. 4 Annexin repeats span residues 14–85, 86–157, 169–241, and 245–316; these read FNAA…GMMT, PTVL…SLSA, ALVR…AIVK, and NKSA…ILCG. N6-acetyllysine occurs at positions 213, 293, and 300.

Belongs to the annexin family. Monomer.

The protein resides in the zymogen granule membrane. In terms of biological role, calcium/phospholipid-binding protein which promotes membrane fusion and is involved in exocytosis. This Sus scrofa (Pig) protein is Annexin A4 (ANXA4).